The primary structure comprises 709 residues: Fatty acid oxidation complex subunit alpha (709 aa).

The tract at residues Met-1 to Pro-188 is enoyl-CoA hydratase. The tract at residues Arg-308–Phe-709 is 3-hydroxyacyl-CoA dehydrogenase.

This sequence in the N-terminal section; belongs to the enoyl-CoA hydratase/isomerase family. In the central section; belongs to the 3-hydroxyacyl-CoA dehydrogenase family. As to quaternary structure, heterotetramer of two alpha chains (FadJ) and two beta chains (FadI).

The protein resides in the cytoplasm. It catalyses the reaction a (3S)-3-hydroxyacyl-CoA = a (2E)-enoyl-CoA + H2O. The enzyme catalyses a 4-saturated-(3S)-3-hydroxyacyl-CoA = a (3E)-enoyl-CoA + H2O. The catalysed reaction is a (3S)-3-hydroxyacyl-CoA + NAD(+) = a 3-oxoacyl-CoA + NADH + H(+). It carries out the reaction (3S)-3-hydroxybutanoyl-CoA = (3R)-3-hydroxybutanoyl-CoA. It functions in the pathway lipid metabolism; fatty acid beta-oxidation. Functionally, catalyzes the formation of a hydroxyacyl-CoA by addition of water on enoyl-CoA. Also exhibits 3-hydroxyacyl-CoA epimerase and 3-hydroxyacyl-CoA dehydrogenase activities. In Shewanella sp. (strain MR-7), this protein is Fatty acid oxidation complex subunit alpha.